Reading from the N-terminus, the 64-residue chain is Antimicrobial peptide 1 (64 aa).

Residues 1–26 (MAKVSSSLLKFAIVLILVLSMSAIIS) form the signal peptide. 3 disulfides stabilise this stretch: Cys-29–Cys-46, Cys-36–Cys-50, and Cys-45–Cys-61.

Belongs to the AMP family.

It is found in the secreted. Its function is as follows. Possesses antifungal and antibacterial activity. This is Antimicrobial peptide 1 from Mesembryanthemum crystallinum (Common ice plant).